We begin with the raw amino-acid sequence, 167 residues long: RNA pyrophosphohydrolase (167 aa).

The Nudix hydrolase domain occupies 8–158 (PYRRNVGAML…KRDIYRTLVR (151 aa)). The Nudix box motif lies at 49 to 70 (GGIDADEDPEEAVLRELREEIG).

This sequence belongs to the Nudix hydrolase family. RppH subfamily. The cofactor is a divalent metal cation.

Its function is as follows. Accelerates the degradation of transcripts by removing pyrophosphate from the 5'-end of triphosphorylated RNA, leading to a more labile monophosphorylated state that can stimulate subsequent ribonuclease cleavage. This Gluconacetobacter diazotrophicus (strain ATCC 49037 / DSM 5601 / CCUG 37298 / CIP 103539 / LMG 7603 / PAl5) protein is RNA pyrophosphohydrolase.